A 424-amino-acid chain; its full sequence is Histidine--tRNA ligase (424 aa).

The protein belongs to the class-II aminoacyl-tRNA synthetase family. In terms of assembly, homodimer.

The protein resides in the cytoplasm. The catalysed reaction is tRNA(His) + L-histidine + ATP = L-histidyl-tRNA(His) + AMP + diphosphate + H(+). The protein is Histidine--tRNA ligase of Salmonella dublin (strain CT_02021853).